A 786-amino-acid chain; its full sequence is Endonuclease MutS2 (786 aa).

An ATP-binding site is contributed by 332 to 339; it reads GPNTGGKT. The Smr domain occupies 711 to 786; sequence IDLRGMDSEE…GTGVTVVILK (76 aa).

The protein belongs to the DNA mismatch repair MutS family. MutS2 subfamily. As to quaternary structure, homodimer. Binds to stalled ribosomes, contacting rRNA.

Endonuclease that is involved in the suppression of homologous recombination and thus may have a key role in the control of bacterial genetic diversity. In terms of biological role, acts as a ribosome collision sensor, splitting the ribosome into its 2 subunits. Detects stalled/collided 70S ribosomes which it binds and splits by an ATP-hydrolysis driven conformational change. Acts upstream of the ribosome quality control system (RQC), a ribosome-associated complex that mediates the extraction of incompletely synthesized nascent chains from stalled ribosomes and their subsequent degradation. Probably generates substrates for RQC. The chain is Endonuclease MutS2 from Clostridium perfringens (strain 13 / Type A).